Reading from the N-terminus, the 56-residue chain is MRQLPGKAAKETRKMKRERKQQNKEGHNRVVTVAIPVCLAVFVMLIVYVYSATSKH.

The segment at 1–27 (MRQLPGKAAKETRKMKRERKQQNKEGH) is disordered. Positions 9-31 (AKETRKMKRERKQQNKEGHNRVV) form a coiled coil. Residues 30–50 (VVTVAIPVCLAVFVMLIVYVY) form a helical membrane-spanning segment.

Belongs to the SMCO4 family.

It localises to the membrane. The polypeptide is Single-pass membrane and coiled-coil domain-containing protein 4 homolog (Nematostella vectensis (Starlet sea anemone)).